The primary structure comprises 994 residues: Integrator complex subunit 5 (994 aa).

The disordered stretch occupies residues 559–586 (NSNNNNELCNGKDYGKRTKLEPGEDKVD). A compositionally biased stretch (basic and acidic residues) spans 571–583 (DYGKRTKLEPGED). A run of 2 helical transmembrane segments spans residues 769–786 (YSLV…DVMY) and 810–826 (AFIN…LIAG).

Belongs to the Integrator subunit 5 family. Belongs to the multiprotein complex Integrator, at least composed of IntS1, IntS2, IntS3, IntS4, omd/IntS5, IntS6, defl/IntS7, IntS8, IntS9, IntS10, IntS11, IntS12, asun/IntS13, IntS14 and IntS15. The core complex associates with protein phosphatase 2A subunits mts/PP2A and Pp2A-29B, to form the Integrator-PP2A (INTAC) complex.

Its subcellular location is the nucleus membrane. It localises to the nucleus. It is found in the cytoplasm. Its function is as follows. Component of the integrator complex, a multiprotein complex that terminates RNA polymerase II (Pol II) transcription in the promoter-proximal region of genes. The integrator complex provides a quality checkpoint during transcription elongation by driving premature transcription termination of transcripts that are unfavorably configured for transcriptional elongation: the complex terminates transcription by (1) catalyzing dephosphorylation of the C-terminal domain (CTD) of Pol II subunit Polr2A/Rbp1 and Spt5, and (2) degrading the exiting nascent RNA transcript via endonuclease activity. The integrator complex is also involved in the 3'-end processing of the U7 snRNA, and also the spliceosomal snRNAs U1, U2, U4 and U5. The chain is Integrator complex subunit 5 from Drosophila melanogaster (Fruit fly).